The following is a 318-amino-acid chain: Basic leucine zipper (bZIP) transcription factor atfB (318 aa).

The tract at residues 114 to 157 (FNSSPPEYAPPKHRSSLSEQSQTDGYGVSTRRRKASAIDQCEQQ) is disordered. The segment at 160-199 (REKREKFLERNRLAASKCRQKKKEHTKLLETRFREVSNKK) is basic motif. Residues 160–223 (REKREKFLER…LNLKNEMLRH (64 aa)) form the bZIP domain. The interval 202-216 (LESEIEHLRSEVLNL) is leucine-zipper. The segment at 275 to 301 (DGPMQLPSEMGSPLDQRRDSEQSIMTE) is disordered.

It belongs to the bZIP family. ATF subfamily.

Its subcellular location is the nucleus. Functionally, transcription factor that acts as a key player in the regulatory circuit that integrates secondary metabolism and cellular response to oxidative stress. Regulates the genes involved in development and stress response through direct binding to their promoters. In Aspergillus flavus (strain ATCC 200026 / FGSC A1120 / IAM 13836 / NRRL 3357 / JCM 12722 / SRRC 167), this protein is Basic leucine zipper (bZIP) transcription factor atfB.